Consider the following 353-residue polypeptide: Inactive ubiquitin thioesterase OTULINL (353 aa).

Residues 1–80 (MKATRSAPRE…KWWIGYLQRK (80 aa)) are required for membrane binding. The OTU domain occupies 125–353 (KCVRPVKRDN…NDHQYHIPVF (229 aa)).

The protein belongs to the peptidase C65 family. Otulin subfamily. As to quaternary structure, does not bind ubiquitin or ubiquitin-like proteins.

It is found in the cytoplasm. It localises to the endoplasmic reticulum membrane. The protein resides in the nucleus envelope. Lacks deubiquitinase activity. This chain is Inactive ubiquitin thioesterase OTULINL, found in Rattus norvegicus (Rat).